Consider the following 271-residue polypeptide: Tryptophan synthase alpha chain (271 aa).

Active-site proton acceptor residues include glutamate 49 and aspartate 60.

The protein belongs to the TrpA family. As to quaternary structure, tetramer of two alpha and two beta chains.

It catalyses the reaction (1S,2R)-1-C-(indol-3-yl)glycerol 3-phosphate + L-serine = D-glyceraldehyde 3-phosphate + L-tryptophan + H2O. Its pathway is amino-acid biosynthesis; L-tryptophan biosynthesis; L-tryptophan from chorismate: step 5/5. In terms of biological role, the alpha subunit is responsible for the aldol cleavage of indoleglycerol phosphate to indole and glyceraldehyde 3-phosphate. This is Tryptophan synthase alpha chain from Yersinia pestis bv. Antiqua (strain Angola).